A 96-amino-acid chain; its full sequence is Fluoride-specific ion channel FluC 1 (96 aa).

Transmembrane regions (helical) follow at residues leucine 4–leucine 24 and leucine 26–methionine 46. The Na(+) site is built by glycine 61 and threonine 64. The chain crosses the membrane as a helical span at residues methionine 69–leucine 89.

The protein belongs to the fluoride channel Fluc/FEX (TC 1.A.43) family.

Its subcellular location is the cell membrane. It carries out the reaction fluoride(in) = fluoride(out). Its activity is regulated as follows. Na(+) is not transported, but it plays an essential structural role and its presence is essential for fluoride channel function. In terms of biological role, fluoride-specific ion channel. Important for reducing fluoride concentration in the cell, thus reducing its toxicity. The protein is Fluoride-specific ion channel FluC 1 of Corynebacterium glutamicum (strain ATCC 13032 / DSM 20300 / JCM 1318 / BCRC 11384 / CCUG 27702 / LMG 3730 / NBRC 12168 / NCIMB 10025 / NRRL B-2784 / 534).